A 502-amino-acid chain; its full sequence is Histone acetyltransferase ESA1 (502 aa).

Positions 1 to 24 (MAGGTPGGEPTVGSGEPRLKSLAT) are disordered. The Tudor-knot domain occupies 28 to 80 (IKTGCIAWVEKEGQPRRAEILSIKTTKSGKQFYCNFDNFNKRLDEWVPVIRLD). The segment covering 88 to 100 (PNPEKEKPKDPKA) has biased composition (basic and acidic residues). The segment at 88–194 (PNPEKEKPKD…EVKREPAEFS (107 aa)) is disordered. The segment covering 112–122 (QPSKKSQKRPS) has biased composition (basic residues). Positions 142–151 (VENQNRQKSA) are enriched in polar residues. Over residues 184 to 194 (TEVKREPAEFS) the composition is skewed to basic and acidic residues. An MYST-type HAT domain is found at 216–490 (SRIRNISKVQ…VDPTKIQWKP (275 aa)). Residues 249-274 (IFICEFCLSYYGDLKAFTRHRKKCTL) form a C2HC MYST-type zinc finger. The short motif at 299–320 (RTWCRNLCLLSKMFLDHKTLYY) is the ESA1-RPD3 motif element. The residue at position 316 (Lys-316) is an N6-acetyllysine; by autocatalysis. Residues 357–361 (ACILT) and 366–372 (QRKGYGR) contribute to the acetyl-CoA site. Catalysis depends on Glu-392, which acts as the Proton donor/acceptor. Position 396 (Ser-396) interacts with acetyl-CoA.

This sequence belongs to the MYST (SAS/MOZ) family. As to quaternary structure, component of the NuA4 histone acetyltransferase complex. In terms of processing, autoacetylation at Lys-316 is required for proper function.

The protein localises to the nucleus. It localises to the chromosome. The catalysed reaction is L-lysyl-[histone] + acetyl-CoA = N(6)-acetyl-L-lysyl-[histone] + CoA + H(+). The enzyme catalyses L-lysyl-[protein] + acetyl-CoA = N(6)-acetyl-L-lysyl-[protein] + CoA + H(+). It carries out the reaction 2-hydroxyisobutanoyl-CoA + L-lysyl-[protein] = N(6)-(2-hydroxyisobutanoyl)-L-lysyl-[protein] + CoA + H(+). It catalyses the reaction (2E)-butenoyl-CoA + L-lysyl-[protein] = N(6)-(2E)-butenoyl-L-lysyl-[protein] + CoA + H(+). In terms of biological role, catalytic component of the NuA4 histone acetyltransferase (HAT) complex which is involved in epigenetic transcriptional activation of selected genes principally by acetylation of nucleosomal histones H4, H3, H2B, H2A and H2A variant H2A.Z. Acetylates histone H4 to form H4K5ac, H4K8ac, H4K12ac and H4K16ac, histone H3 to form H3K14ac, and histone H2A to form H2AK4ac and H2AK7ac. The NuA4 complex is involved in the DNA damage response and is required for chromosome segregation. The NuA4 complex plays a direct role in repair of DNA double-strand breaks (DSBs) through homologous recombination. Recruitment to promoters depends on H3K4me. Also acetylates non-histone proteins. In addition to protein acetyltransferase, can use different acyl-CoA substrates, such as 2-hydroxyisobutanoyl-CoA (2-hydroxyisobutyryl-CoA) or (2E)-butenoyl-CoA (crotonyl-CoA), and is able to mediate protein 2-hydroxyisobutyrylation and crotonylation, respectively. The sequence is that of Histone acetyltransferase ESA1 (ESA1) from Gibberella zeae (strain ATCC MYA-4620 / CBS 123657 / FGSC 9075 / NRRL 31084 / PH-1) (Wheat head blight fungus).